The following is a 191-amino-acid chain: Cytochrome c oxidase assembly protein CtaG (191 aa).

The Cytoplasmic portion of the chain corresponds to 1-9 (MSLSPHQKT). Residues 10–30 (AGGLVLVVAVMGAASFAAVPF) form a helical; Signal-anchor for type II membrane protein membrane-spanning segment. Residues 31–191 (YNWFCRVTGF…LAAESATDVN (161 aa)) lie on the Periplasmic side of the membrane.

This sequence belongs to the COX11/CtaG family.

It localises to the cell inner membrane. Exerts its effect at some terminal stage of cytochrome c oxidase synthesis, probably by being involved in the insertion of the copper B into subunit I. In Cereibacter sphaeroides (strain ATCC 17029 / ATH 2.4.9) (Rhodobacter sphaeroides), this protein is Cytochrome c oxidase assembly protein CtaG.